The sequence spans 74 residues: Antimicrobial peptide AcrAP2 (74 aa).

The first 22 residues, 1–22 (MEIKYLLTVFLVLLIVSDHCQA), serve as a signal peptide directing secretion. At Lys40 the chain carries Lysine amide. The propeptide occupies 46–74 (NLDGQIDRFRNFRKRDAELEELLSKLPIY).

This sequence belongs to the non-disulfide-bridged peptide (NDBP) superfamily. Short antimicrobial peptide (group 4) family. In terms of tissue distribution, expressed by the venom gland.

The protein localises to the secreted. Its subcellular location is the target cell membrane. Functionally, has antimicrobial activity against the Gram-positive bacteria S.aureus (MIC=8 uM) and the yeast C.albicans (MIC=16 uM). Causes hemolysis on horse erythrocytes (64 uM for 100% hemolysis). Minimum bactericidal concentrations have also been tested against S.aureus and is four-fold higher (MBC=32 uM). The polypeptide is Antimicrobial peptide AcrAP2 (Androctonus crassicauda (Arabian fat-tailed scorpion)).